Consider the following 315-residue polypeptide: Ankyrin repeat domain-containing protein SOWAHD (315 aa).

Residues Met1–Leu39 are disordered. ANK repeat units follow at residues Pro112 to Leu141, Thr147 to Glu162, and Gly186 to Arg216.

Belongs to the SOWAH family.

This Homo sapiens (Human) protein is Ankyrin repeat domain-containing protein SOWAHD (SOWAHD).